We begin with the raw amino-acid sequence, 407 residues long: Digeranylgeranylglycerophospholipid reductase (407 aa).

Residues Ala15, Glu34, Cys45, Ala46, Gly48, Arg99, Ala123, Asp281, Gly293, and Ile294 each contribute to the FAD site.

The protein belongs to the geranylgeranyl reductase family. DGGGPL reductase subfamily. FAD serves as cofactor.

It carries out the reaction a 2,3-bis-O-phytanyl-sn-glycerol 1-phospholipid + 8 oxidized 2[4Fe-4S]-[ferredoxin] = a 2,3-bis-O-(geranylgeranyl)-sn-glycerol 1-phospholipid + 8 reduced 2[4Fe-4S]-[ferredoxin] + 16 H(+). The enzyme catalyses 2,3-bis-O-(phytanyl)-sn-glycerol 1-phosphate + 8 oxidized 2[4Fe-4S]-[ferredoxin] = 2,3-bis-O-(geranylgeranyl)-sn-glycerol 1-phosphate + 8 reduced 2[4Fe-4S]-[ferredoxin] + 16 H(+). The catalysed reaction is a 2,3-bis-O-phytanyl-sn-glycerol 1-phospholipid + 8 A = a 2,3-bis-O-(geranylgeranyl)-sn-glycerol 1-phospholipid + 8 AH2. It catalyses the reaction CDP-2,3-bis-O-(geranylgeranyl)-sn-glycerol + 8 AH2 = CDP-2,3-bis-O-(phytanyl)-sn-glycerol + 8 A. It carries out the reaction archaetidylserine + 8 AH2 = 2,3-bis-O-phytanyl-sn-glycero-3-phospho-L-serine + 8 A. Its pathway is membrane lipid metabolism; glycerophospholipid metabolism. Is involved in the reduction of 2,3-digeranylgeranylglycerophospholipids (unsaturated archaeols) into 2,3-diphytanylglycerophospholipids (saturated archaeols) in the biosynthesis of archaeal membrane lipids. Catalyzes the formation of archaetidic acid (2,3-di-O-phytanyl-sn-glyceryl phosphate) from 2,3-di-O-geranylgeranylglyceryl phosphate (DGGGP) via the hydrogenation of each double bond of the isoprenoid chains. Is also probably able to reduce double bonds of geranyl groups in CDP-2,3-bis-O-(geranylgeranyl)-sn-glycerol and archaetidylserine, thus acting at various stages in the biosynthesis of archaeal membrane lipids. The protein is Digeranylgeranylglycerophospholipid reductase of Methanosarcina mazei (strain ATCC BAA-159 / DSM 3647 / Goe1 / Go1 / JCM 11833 / OCM 88) (Methanosarcina frisia).